Reading from the N-terminus, the 290-residue chain is Glyceraldehyde-3-phosphate dehydrogenase (290 aa).

NAD(+) contacts are provided by aspartate 13 and arginine 58. Residues 129–131 (SCT), threonine 160, 189–190 (TG), and arginine 212 each bind D-glyceraldehyde 3-phosphate. Cysteine 130 functions as the Nucleophile in the catalytic mechanism.

This sequence belongs to the glyceraldehyde-3-phosphate dehydrogenase family. In terms of assembly, homotetramer.

The protein localises to the cytoplasm. It carries out the reaction D-glyceraldehyde 3-phosphate + phosphate + NAD(+) = (2R)-3-phospho-glyceroyl phosphate + NADH + H(+). The protein operates within carbohydrate degradation; glycolysis; pyruvate from D-glyceraldehyde 3-phosphate: step 1/5. The protein is Glyceraldehyde-3-phosphate dehydrogenase (GPD) of Lactarius deterrimus (False saffron milkcap).